Reading from the N-terminus, the 157-residue chain is SUMO-conjugating enzyme UBC9 (157 aa).

At Ser-2 the chain carries N-acetylserine. The region spanning 4-157 (LCLQRLQEER…VLLQAKQYSK (154 aa)) is the UBC core domain. Cys-93 functions as the Glycyl thioester intermediate in the catalytic mechanism.

It belongs to the ubiquitin-conjugating enzyme family. Interacts with SIZ1.

Its subcellular location is the nucleus. The protein operates within protein modification; protein sumoylation. In terms of biological role, E2 ubiquitin-like--protein ligase mediating SUMO/Smt3 attachment to septins and PCNA. Seems to be involved in degradation of S- (CLB5) and M-phase cyclins (CLB2). The protein is SUMO-conjugating enzyme UBC9 (UBC9) of Saccharomyces cerevisiae (strain ATCC 204508 / S288c) (Baker's yeast).